Reading from the N-terminus, the 93-residue chain is Small ribosomal subunit protein uS19 (93 aa).

It belongs to the universal ribosomal protein uS19 family.

In terms of biological role, protein S19 forms a complex with S13 that binds strongly to the 16S ribosomal RNA. The chain is Small ribosomal subunit protein uS19 from Leuconostoc citreum (strain KM20).